Reading from the N-terminus, the 99-residue chain is Large ribosomal subunit protein uL23 (99 aa).

This sequence belongs to the universal ribosomal protein uL23 family. As to quaternary structure, part of the 50S ribosomal subunit. Contacts protein L29, and trigger factor when it is bound to the ribosome.

Functionally, one of the early assembly proteins it binds 23S rRNA. One of the proteins that surrounds the polypeptide exit tunnel on the outside of the ribosome. Forms the main docking site for trigger factor binding to the ribosome. The polypeptide is Large ribosomal subunit protein uL23 (Azotobacter vinelandii (strain DJ / ATCC BAA-1303)).